The primary structure comprises 196 residues: Holliday junction branch migration complex subunit RuvA (196 aa).

Residues 1 to 69 are domain I; the sequence is MIVGLRGTII…EDAHLLFGFC (69 aa). The tract at residues 70–148 is domain II; it reads EEIEKQTFER…QLLQSQEESI (79 aa). Residues 149–157 form a flexible linker region; sequence APSNNLKYE. The interval 157-196 is domain III; sequence EASLALQSLGFKRNEIQKVLEHIEALSVSEIVKEALKRLA.

It belongs to the RuvA family. As to quaternary structure, homotetramer. Forms an RuvA(8)-RuvB(12)-Holliday junction (HJ) complex. HJ DNA is sandwiched between 2 RuvA tetramers; dsDNA enters through RuvA and exits via RuvB. An RuvB hexamer assembles on each DNA strand where it exits the tetramer. Each RuvB hexamer is contacted by two RuvA subunits (via domain III) on 2 adjacent RuvB subunits; this complex drives branch migration. In the full resolvosome a probable DNA-RuvA(4)-RuvB(12)-RuvC(2) complex forms which resolves the HJ.

It localises to the cytoplasm. In terms of biological role, the RuvA-RuvB-RuvC complex processes Holliday junction (HJ) DNA during genetic recombination and DNA repair, while the RuvA-RuvB complex plays an important role in the rescue of blocked DNA replication forks via replication fork reversal (RFR). RuvA specifically binds to HJ cruciform DNA, conferring on it an open structure. The RuvB hexamer acts as an ATP-dependent pump, pulling dsDNA into and through the RuvAB complex. HJ branch migration allows RuvC to scan DNA until it finds its consensus sequence, where it cleaves and resolves the cruciform DNA. The protein is Holliday junction branch migration complex subunit RuvA of Helicobacter hepaticus (strain ATCC 51449 / 3B1).